A 383-amino-acid polypeptide reads, in one-letter code: Succinyl-diaminopimelate desuccinylase (383 aa).

Histidine 68 is a Zn(2+) binding site. Aspartate 70 is a catalytic residue. Position 100 (aspartate 100) interacts with Zn(2+). Glutamate 130 serves as the catalytic Proton acceptor. Residues glutamate 131, glutamate 159, and histidine 352 each coordinate Zn(2+).

It belongs to the peptidase M20A family. DapE subfamily. In terms of assembly, homodimer. Zn(2+) serves as cofactor. It depends on Co(2+) as a cofactor.

The catalysed reaction is N-succinyl-(2S,6S)-2,6-diaminopimelate + H2O = (2S,6S)-2,6-diaminopimelate + succinate. The protein operates within amino-acid biosynthesis; L-lysine biosynthesis via DAP pathway; LL-2,6-diaminopimelate from (S)-tetrahydrodipicolinate (succinylase route): step 3/3. In terms of biological role, catalyzes the hydrolysis of N-succinyl-L,L-diaminopimelic acid (SDAP), forming succinate and LL-2,6-diaminopimelate (DAP), an intermediate involved in the bacterial biosynthesis of lysine and meso-diaminopimelic acid, an essential component of bacterial cell walls. In Granulibacter bethesdensis (strain ATCC BAA-1260 / CGDNIH1), this protein is Succinyl-diaminopimelate desuccinylase.